The chain runs to 331 residues: L-lactate dehydrogenase A chain (331 aa).

Residues 29–57 (GMVG…MEDK) and R98 each bind NAD(+). The substrate site is built by R105, N137, and R168. N137 is a binding site for NAD(+). H192 functions as the Proton acceptor in the catalytic mechanism. T247 provides a ligand contact to substrate.

Belongs to the LDH/MDH superfamily. LDH family. As to quaternary structure, homotetramer.

It is found in the cytoplasm. The catalysed reaction is (S)-lactate + NAD(+) = pyruvate + NADH + H(+). It functions in the pathway fermentation; pyruvate fermentation to lactate; (S)-lactate from pyruvate: step 1/1. Its function is as follows. Interconverts simultaneously and stereospecifically pyruvate and lactate with concomitant interconversion of NADH and NAD(+). The protein is L-lactate dehydrogenase A chain (ldha) of Paranotothenia magellanica (Maori cod).